The sequence spans 377 residues: Succinyl-diaminopimelate desuccinylase (377 aa).

Residue H68 coordinates Zn(2+). D70 is an active-site residue. Residue D101 coordinates Zn(2+). The Proton acceptor role is filled by E135. Zn(2+) contacts are provided by E136, E164, and H350.

The protein belongs to the peptidase M20A family. DapE subfamily. As to quaternary structure, homodimer. The cofactor is Zn(2+). It depends on Co(2+) as a cofactor.

It carries out the reaction N-succinyl-(2S,6S)-2,6-diaminopimelate + H2O = (2S,6S)-2,6-diaminopimelate + succinate. It functions in the pathway amino-acid biosynthesis; L-lysine biosynthesis via DAP pathway; LL-2,6-diaminopimelate from (S)-tetrahydrodipicolinate (succinylase route): step 3/3. Functionally, catalyzes the hydrolysis of N-succinyl-L,L-diaminopimelic acid (SDAP), forming succinate and LL-2,6-diaminopimelate (DAP), an intermediate involved in the bacterial biosynthesis of lysine and meso-diaminopimelic acid, an essential component of bacterial cell walls. In Aliivibrio fischeri (strain ATCC 700601 / ES114) (Vibrio fischeri), this protein is Succinyl-diaminopimelate desuccinylase.